The sequence spans 382 residues: Chaperone protein DnaJ (382 aa).

Residues 5–70 (DYYELLGVQK…EKRAAYDRYG (66 aa)) form the J domain. The CR-type zinc-finger motif lies at 146-224 (GAEKEISFRK…CHGEGRVRRT (79 aa)). The Zn(2+) site is built by cysteine 159, cysteine 162, cysteine 176, cysteine 179, cysteine 198, cysteine 201, cysteine 212, and cysteine 215. 4 CXXCXGXG motif repeats span residues 159-166 (CERCDGSG), 176-183 (CPTCRGAG), 198-205 (CPTCGGMG), and 212-219 (CTVCHGEG). Residues 230–250 (RIPPGVDNGSRLRSSGNGEAG) form a disordered region.

Belongs to the DnaJ family. As to quaternary structure, homodimer. The cofactor is Zn(2+).

The protein localises to the cytoplasm. Its function is as follows. Participates actively in the response to hyperosmotic and heat shock by preventing the aggregation of stress-denatured proteins and by disaggregating proteins, also in an autonomous, DnaK-independent fashion. Unfolded proteins bind initially to DnaJ; upon interaction with the DnaJ-bound protein, DnaK hydrolyzes its bound ATP, resulting in the formation of a stable complex. GrpE releases ADP from DnaK; ATP binding to DnaK triggers the release of the substrate protein, thus completing the reaction cycle. Several rounds of ATP-dependent interactions between DnaJ, DnaK and GrpE are required for fully efficient folding. Also involved, together with DnaK and GrpE, in the DNA replication of plasmids through activation of initiation proteins. The sequence is that of Chaperone protein DnaJ from Opitutus terrae (strain DSM 11246 / JCM 15787 / PB90-1).